The primary structure comprises 194 residues: MSALWLLLGLLALMDLSESSNWGCYGNIQSLDTPGASCGIGRRHGLNYCGVRASERLAEIDMPYLLKYQPMMQTIGQKYCMDPAVIAGVLSRKSPGDKILVNMGDRTSMVQDPGSQAPTSWISESQVSQTTEVLTTRIKEIQRRFPTWTPDQYLRGGLCAYSGGAGYVRSSQDLSCDFCNDVLARAKYLKRHGF.

An N-terminal signal peptide occupies residues 1-19; sequence MSALWLLLGLLALMDLSES. 2 disulfide bridges follow: C24-C80 and C38-C49.

This sequence belongs to the glycosyl hydrolase 23 family.

It is found in the secreted. The sequence is that of Lysozyme g-like protein 1 (LYG1) from Homo sapiens (Human).